The following is a 916-amino-acid chain: Protein translocase subunit SecA (916 aa).

ATP is bound by residues Q87, 105–109 (GEGKT), and D507. Positions 900, 902, 911, and 912 each coordinate Zn(2+).

The protein belongs to the SecA family. Monomer and homodimer. Part of the essential Sec protein translocation apparatus which comprises SecA, SecYEG and auxiliary proteins SecDF-YajC and YidC. It depends on Zn(2+) as a cofactor.

The protein localises to the cell inner membrane. It is found in the cytoplasm. It carries out the reaction ATP + H2O + cellular proteinSide 1 = ADP + phosphate + cellular proteinSide 2.. Part of the Sec protein translocase complex. Interacts with the SecYEG preprotein conducting channel. Has a central role in coupling the hydrolysis of ATP to the transfer of proteins into and across the cell membrane, serving both as a receptor for the preprotein-SecB complex and as an ATP-driven molecular motor driving the stepwise translocation of polypeptide chains across the membrane. In Neisseria meningitidis serogroup C (strain 053442), this protein is Protein translocase subunit SecA.